A 1486-amino-acid polypeptide reads, in one-letter code: Chromosome partition protein MukB (1486 aa).

34 to 41 (GGNGAGKS) serves as a coordination point for ATP. Coiled coils occupy residues 326–418 (LEAD…QYNQ), 444–480 (LETF…QAYQ), and 509–603 (RHLA…RAPV). Residues 666–783 (PGGSEDQRLN…EVPLFGRAAR (118 aa)) form a flexible hinge region. Coiled coils occupy residues 835–923 (EAEI…AKLE), 977–1115 (EMLS…TAKA), and 1209–1266 (VEAI…QNVS).

Belongs to the SMC family. MukB subfamily. In terms of assembly, homodimerization via its hinge domain. Binds to DNA via its C-terminal region. Interacts, and probably forms a ternary complex, with MukE and MukF via its C-terminal region. The complex formation is stimulated by calcium or magnesium. Interacts with tubulin-related protein FtsZ.

It localises to the cytoplasm. It is found in the nucleoid. In terms of biological role, plays a central role in chromosome condensation, segregation and cell cycle progression. Functions as a homodimer, which is essential for chromosome partition. Involved in negative DNA supercoiling in vivo, and by this means organize and compact chromosomes. May achieve or facilitate chromosome segregation by condensation DNA from both sides of a centrally located replisome during cell division. This Escherichia coli O6:H1 (strain CFT073 / ATCC 700928 / UPEC) protein is Chromosome partition protein MukB.